The chain runs to 77 residues: Conotoxin S6.11 (77 aa).

A signal peptide spans 1-19 (MEKLTILLLVAAVLMSTQA). Residues 20-50 (LIQGGLDERQKAKSNFFSKRKSNAESWWEGE) constitute a propeptide that is removed on maturation. Cystine bridges form between cysteine 51–cysteine 65, cysteine 58–cysteine 69, and cysteine 64–cysteine 74.

The protein belongs to the conotoxin O2 superfamily. Expressed by the venom duct.

The protein resides in the secreted. This chain is Conotoxin S6.11, found in Conus striatus (Striated cone).